A 263-amino-acid polypeptide reads, in one-letter code: Putative aliphatic sulfonates transport permease protein SsuC (263 aa).

Topologically, residues 1 to 13 (MATPVKKWLLRVA) are cytoplasmic. The helical transmembrane segment at 14 to 34 (PWFLPVGIVAVWQLASSVGWL) threads the bilayer. Over 35-43 (STRILPSPE) the chain is Periplasmic. Residues 44–64 (GVVTAFWTLSASGELWQHLAI) traverse the membrane as a helical segment. An ABC transmembrane type-1 domain is found at 58–242 (LWQHLAISSW…LLGKLADVSA (185 aa)). Over 65–68 (SSWR) the chain is Cytoplasmic. A helical transmembrane segment spans residues 69–89 (ALIGFSIGGSLGLILGLISGL). At 90–102 (SRWGERLLDTSIQ) the chain is on the periplasmic side. The helical transmembrane segment at 103–122 (MLRNVPHLALIPLVILWFGI) threads the bilayer. Topologically, residues 123–125 (DES) are cytoplasmic. A helical transmembrane segment spans residues 126–148 (AKIFLVALGTLFPIYINTWHGIR). The Periplasmic segment spans residues 149–164 (NIDRGLVEMARSYGLS). The chain crosses the membrane as a helical span at residues 165-185 (GIPLFIHVILPGALPSIMVGV). The Cytoplasmic segment spans residues 186 to 187 (RF). A helical membrane pass occupies residues 188 to 208 (ALGLMWLTLIVAETISANSGI). The Periplasmic segment spans residues 209–217 (GYLAMNARE). Residues 218–238 (FLQTDVVVVAIILYALLGKLA) traverse the membrane as a helical segment. At 239-263 (DVSAQLLERLWLRWNPAYHLKEATV) the chain is on the cytoplasmic side.

This sequence belongs to the binding-protein-dependent transport system permease family. CysTW subfamily.

Its subcellular location is the cell inner membrane. Its function is as follows. Part of a binding-protein-dependent transport system for aliphatic sulfonates. Probably responsible for the translocation of the substrate across the membrane. In Escherichia coli (strain K12), this protein is Putative aliphatic sulfonates transport permease protein SsuC (ssuC).